Here is a 309-residue protein sequence, read N- to C-terminus: Porphobilinogen deaminase (309 aa).

C244 bears the S-(dipyrrolylmethanemethyl)cysteine mark.

This sequence belongs to the HMBS family. Monomer. The cofactor is dipyrromethane.

It catalyses the reaction 4 porphobilinogen + H2O = hydroxymethylbilane + 4 NH4(+). It functions in the pathway porphyrin-containing compound metabolism; protoporphyrin-IX biosynthesis; coproporphyrinogen-III from 5-aminolevulinate: step 2/4. Its function is as follows. Tetrapolymerization of the monopyrrole PBG into the hydroxymethylbilane pre-uroporphyrinogen in several discrete steps. In Listeria monocytogenes serovar 1/2a (strain ATCC BAA-679 / EGD-e), this protein is Porphobilinogen deaminase.